Reading from the N-terminus, the 187-residue chain is Oligoribonuclease (187 aa).

The region spanning 7 to 170 (LCWLDMEMTG…DDILESIEEM (164 aa)) is the Exonuclease domain. The active site involves Tyr128.

It belongs to the oligoribonuclease family.

It localises to the cytoplasm. Functionally, 3'-to-5' exoribonuclease specific for small oligoribonucleotides. This Neisseria meningitidis serogroup B (strain ATCC BAA-335 / MC58) protein is Oligoribonuclease.